Reading from the N-terminus, the 590-residue chain is Membrane protein insertase YidC (590 aa).

A run of 5 helical transmembrane segments spans residues 5–25 (SVIG…FMKP), 368–388 (GLII…LSLA), 433–453 (LGGC…FYVF), 483–503 (LPLY…TVFF), and 519–539 (IMMW…PAGL).

The protein belongs to the OXA1/ALB3/YidC family. Type 1 subfamily. Interacts with the Sec translocase complex via SecD. Specifically interacts with transmembrane segments of nascent integral membrane proteins during membrane integration.

The protein resides in the cell inner membrane. Its function is as follows. Required for the insertion and/or proper folding and/or complex formation of integral membrane proteins into the membrane. Involved in integration of membrane proteins that insert both dependently and independently of the Sec translocase complex, as well as at least some lipoproteins. Aids folding of multispanning membrane proteins. In Chlorobaculum tepidum (strain ATCC 49652 / DSM 12025 / NBRC 103806 / TLS) (Chlorobium tepidum), this protein is Membrane protein insertase YidC.